The primary structure comprises 430 residues: Serine hydroxymethyltransferase (430 aa).

Position 120–122 (120–122) interacts with (6S)-5,6,7,8-tetrahydrofolate; the sequence is GHI. The residue at position 226 (lysine 226) is an N6-(pyridoxal phosphate)lysine.

This sequence belongs to the SHMT family. In terms of assembly, homodimer. It depends on pyridoxal 5'-phosphate as a cofactor.

It localises to the cytoplasm. It participates in amino-acid biosynthesis; glycine biosynthesis; glycine from L-serine: step 1/1. Its function is as follows. Catalyzes the reversible interconversion of serine and glycine with a modified folate serving as the one-carbon carrier. Also exhibits a pteridine-independent aldolase activity toward beta-hydroxyamino acids, producing glycine and aldehydes, via a retro-aldol mechanism. This Pyrobaculum islandicum (strain DSM 4184 / JCM 9189 / GEO3) protein is Serine hydroxymethyltransferase.